A 289-amino-acid chain; its full sequence is Rhodopsin (289 aa).

Residues 1–7 (YLVNPAA) lie on the Extracellular side of the membrane. A helical transmembrane segment spans residues 8–32 (YAALGAYMFLLILIGFPINFLTLYV). At 33-44 (TLEHKKLRTPLN) the chain is on the cytoplasmic side. Residues 45–67 (YILLNLAVGNLFMVLGGFTTTMY) traverse the membrane as a helical segment. Residues 68 to 81 (TSMHGYFVLGRLGC) are Extracellular-facing. Cysteines 81 and 158 form a disulfide. Residues 82–104 (NLEGFFATLGGEIALWSLVVLAI) traverse the membrane as a helical segment. A 'Ionic lock' involved in activated form stabilization motif is present at residues 105-107 (ERW). Over 105-123 (ERWIVVCKPISKFRFTEDH) the chain is Cytoplasmic. The helical transmembrane segment at 124 to 144 (AIMGLAFSWVMGLACAVPPLV) threads the bilayer. Topologically, residues 145-173 (GWSRYIPEGMKCSCGVDYYTRAEGFNNES) are extracellular. A glycan (N-linked (GlcNAc...) asparagine) is linked at Asn-171. A helical transmembrane segment spans residues 174 to 195 (FVIYMFIVHFLIPLSVIFFCYG). The Cytoplasmic portion of the chain corresponds to 196 to 223 (RLLCAVKEAAAAQQESETTQRAEKEVSR). A helical membrane pass occupies residues 224 to 245 (MVVIMVIGFLVCWLPYASVAWW). The Extracellular portion of the chain corresponds to 246–257 (IFCNQGSDFGPI). The chain crosses the membrane as a helical span at residues 258–279 (FMTLPSFFAKRPAIYNPMIYIC). Position 267 is an N6-(retinylidene)lysine (Lys-267). Residues 280–289 (MNKQFRHCMI) are Cytoplasmic-facing.

This sequence belongs to the G-protein coupled receptor 1 family. Opsin subfamily. Post-translationally, phosphorylated on some or all of the serine and threonine residues present in the C-terminal region. In terms of processing, contains one covalently linked retinal chromophore.

Its subcellular location is the membrane. The protein resides in the cell projection. It is found in the cilium. The protein localises to the photoreceptor outer segment. Photoreceptor required for image-forming vision at low light intensity. While most salt water fish species use retinal as chromophore, most freshwater fish use 3-dehydroretinal, or a mixture of retinal and 3-dehydroretinal. Light-induced isomerization of 11-cis to all-trans retinal triggers a conformational change that activates signaling via G-proteins. Subsequent receptor phosphorylation mediates displacement of the bound G-protein alpha subunit by arrestin and terminates signaling. This Cottinella boulengeri (Short-headed sculpin) protein is Rhodopsin (rho).